A 130-amino-acid chain; its full sequence is MISMASWQLLLLLCVATYGEPLAKVAPLVKPGSTGQQSGPQELVNAWEKESRYAESKPGSAGLRARRSSPCPPVEGPAGRQRPLCASRSRLIPAPRGAVLVQREKDLSTYNWNSFGLRYGRRQAARAARG.

A signal peptide spans 1–19 (MISMASWQLLLLLCVATYG). Residues 49–82 (KESRYAESKPGSAGLRARRSSPCPPVEGPAGRQR) form a disordered region. A disulfide bridge links Cys71 with Cys85. Tyr110 bears the Phosphotyrosine mark. The interval 110-119 (YNWNSFGLRY) is essential for receptor binding and receptor activation. Tyr119 bears the Tyrosine amide mark.

It belongs to the KISS1 family. As to expression, weak in all tissue types with highest levels in lung and 15- 17-day embryos. Expressed in areas of the hypothalamus implicated in the neuroendocrine regulation of gonadotropin secretion, including the anteroventral periventricular nucleus, the periventricular nucleus, and the arcuate nucleus.

It localises to the secreted. Functionally, metastasis suppressor protein. May regulate events downstream of cell-matrix adhesion, perhaps involving cytoskeletal reorganization. Generates a C-terminally amidated peptide, metastin which functions as the endogenous ligand of the G-protein coupled receptor GPR54. Activation of the receptor inhibits cell proliferation and cell migration, key characteristics of tumor metastasis. The receptor is also essential for normal gonadotropin-released hormone physiology and for puberty. The hypothalamic KiSS1/GPR54 system is a pivotal factor in central regulation of the gonadotropic axis at puberty and in adulthood. Intracerebroventricular administration induces an increase in serum LH and FSH levels in prepubertal male and female as well as in adult animals. The sequence is that of Metastasis-suppressor KiSS-1 (Kiss1) from Mus musculus (Mouse).